A 247-amino-acid chain; its full sequence is Triosephosphate isomerase (247 aa).

9–11 (NWK) provides a ligand contact to substrate. Catalysis depends on His94, which acts as the Electrophile. Glu166 serves as the catalytic Proton acceptor. Substrate contacts are provided by residues Gly172, Ser211, and 232-233 (GG).

Belongs to the triosephosphate isomerase family. As to quaternary structure, homodimer.

Its subcellular location is the cytoplasm. It carries out the reaction D-glyceraldehyde 3-phosphate = dihydroxyacetone phosphate. It participates in carbohydrate biosynthesis; gluconeogenesis. Its pathway is carbohydrate degradation; glycolysis; D-glyceraldehyde 3-phosphate from glycerone phosphate: step 1/1. Functionally, involved in the gluconeogenesis. Catalyzes stereospecifically the conversion of dihydroxyacetone phosphate (DHAP) to D-glyceraldehyde-3-phosphate (G3P). The protein is Triosephosphate isomerase of Cupriavidus taiwanensis (strain DSM 17343 / BCRC 17206 / CCUG 44338 / CIP 107171 / LMG 19424 / R1) (Ralstonia taiwanensis (strain LMG 19424)).